Reading from the N-terminus, the 327-residue chain is E3 ubiquitin ligase Rnf121 (327 aa).

5 helical membrane-spanning segments follow: residues 50–70 (MHAEMVLILIATLVVAQLLLV), 79–96 (SYNMVTLFQMWIVPVYFT), 99–119 (LHWWRFLGIWFLFSIVTAFVT), 148–168 (ATGIVGYIAVMFTLFGLNLLF), and 173–193 (EDAMDFGISLLFYGLYYGVLG). The RING-type; atypical zinc-finger motif lies at 226–276 (CAVCGQQIFVDVNEEGIIENTYRLSCNHVFHEFCIRGWCIVGKKQTCPYCK).

The protein belongs to the RNF121 family.

It localises to the endoplasmic reticulum membrane. The enzyme catalyses S-ubiquitinyl-[E2 ubiquitin-conjugating enzyme]-L-cysteine + [acceptor protein]-L-lysine = [E2 ubiquitin-conjugating enzyme]-L-cysteine + N(6)-ubiquitinyl-[acceptor protein]-L-lysine.. It functions in the pathway protein modification; protein ubiquitination. In terms of biological role, E3 ubiquitin ligase which accepts ubiquitin and transfers it to substrates thereby promoting their degradation by the endoplasmic reticulum-associated degradation (ERAD) pathway which is a pathway involved in ubiquitin-dependent degradation of misfolded endoplasmic reticulum proteins. May regulate the unfolded protein response to reduce endoplasmic reticulum stress. This chain is E3 ubiquitin ligase Rnf121 (rnf121), found in Xenopus tropicalis (Western clawed frog).